We begin with the raw amino-acid sequence, 341 residues long: S-adenosylmethionine:tRNA ribosyltransferase-isomerase (341 aa).

Belongs to the QueA family. Monomer.

Its subcellular location is the cytoplasm. It carries out the reaction 7-aminomethyl-7-carbaguanosine(34) in tRNA + S-adenosyl-L-methionine = epoxyqueuosine(34) in tRNA + adenine + L-methionine + 2 H(+). It functions in the pathway tRNA modification; tRNA-queuosine biosynthesis. Functionally, transfers and isomerizes the ribose moiety from AdoMet to the 7-aminomethyl group of 7-deazaguanine (preQ1-tRNA) to give epoxyqueuosine (oQ-tRNA). This is S-adenosylmethionine:tRNA ribosyltransferase-isomerase from Chlorobium luteolum (strain DSM 273 / BCRC 81028 / 2530) (Pelodictyon luteolum).